A 333-amino-acid chain; its full sequence is tRNA uridine(34) hydroxylase (333 aa).

Residues 123 to 217 enclose the Rhodanese domain; it reads SDPEVVLVDT…YLEEVNKAES (95 aa). The active-site Cysteine persulfide intermediate is the Cys-177. The segment covering 313–327 has biased composition (basic and acidic residues); sequence QKKEALRKQSAEKNK. A disordered region spans residues 313–333; that stretch reads QKKEALRKQSAEKNKAKQANA.

This sequence belongs to the TrhO family.

It carries out the reaction uridine(34) in tRNA + AH2 + O2 = 5-hydroxyuridine(34) in tRNA + A + H2O. In terms of biological role, catalyzes oxygen-dependent 5-hydroxyuridine (ho5U) modification at position 34 in tRNAs. The polypeptide is tRNA uridine(34) hydroxylase (Shewanella oneidensis (strain ATCC 700550 / JCM 31522 / CIP 106686 / LMG 19005 / NCIMB 14063 / MR-1)).